We begin with the raw amino-acid sequence, 152 residues long: Ribosomal RNA large subunit methyltransferase H (152 aa).

S-adenosyl-L-methionine-binding positions include L70, G101, and 120 to 125; that span reads LSDLTF.

It belongs to the RNA methyltransferase RlmH family. In terms of assembly, homodimer.

Its subcellular location is the cytoplasm. It carries out the reaction pseudouridine(1915) in 23S rRNA + S-adenosyl-L-methionine = N(3)-methylpseudouridine(1915) in 23S rRNA + S-adenosyl-L-homocysteine + H(+). Its function is as follows. Specifically methylates the pseudouridine at position 1915 (m3Psi1915) in 23S rRNA. This Pseudothermotoga lettingae (strain ATCC BAA-301 / DSM 14385 / NBRC 107922 / TMO) (Thermotoga lettingae) protein is Ribosomal RNA large subunit methyltransferase H.